A 149-amino-acid polypeptide reads, in one-letter code: Large ribosomal subunit protein uL22c (149 aa).

Belongs to the universal ribosomal protein uL22 family. As to quaternary structure, part of the 50S ribosomal subunit.

The protein localises to the plastid. It localises to the chloroplast. In terms of biological role, this protein binds specifically to 23S rRNA. Functionally, the globular domain of the protein is located near the polypeptide exit tunnel on the outside of the subunit, while an extended beta-hairpin is found that lines the wall of the exit tunnel in the center of the 70S ribosome. The sequence is that of Large ribosomal subunit protein uL22c (rpl22) from Oryza nivara (Indian wild rice).